The sequence spans 249 residues: BPI fold-containing family A member 2 (249 aa).

A signal peptide spans 1-18 (MLQLWKLVLLCGVLTGTS). Asn124 and Asn132 each carry an N-linked (GlcNAc...) asparagine glycan. Residues Cys174 and Cys217 are joined by a disulfide bond.

This sequence belongs to the BPI/LBP/Plunc superfamily. Plunc family. In terms of tissue distribution, detected in submandibular gland. Secreted into saliva.

The protein localises to the secreted. Has strong antibacterial activity against P.aeruginosa. This chain is BPI fold-containing family A member 2 (BPIFA2), found in Homo sapiens (Human).